The primary structure comprises 658 residues: ATP-dependent RNA helicase DDX3Y (658 aa).

Residues 1–143 (MSQVAAESTA…DWSKPLPPSE (143 aa)) form a disordered region. An N-acetylserine modification is found at serine 2. Basic and acidic residues predominate over residues 45-69 (RNRETSKGVCDKDSSGWSCSKDKDA). N6-acetyllysine is present on lysine 56. A phosphoserine mark is found at serine 86 and serine 90. Positions 94 to 129 (GRFDDHGRNDYDGIGGRDRTGFGKFERSGHSRWSDR) are enriched in basic and acidic residues. Arginine 101 is modified (omega-N-methylarginine). Tyrosine 104 is modified (phosphotyrosine). Arginine 110 is modified (omega-N-methylarginine). At lysine 117 the chain carries N6-acetyllysine. Phosphoserine is present on residues serine 130 and serine 182. The short motif at 179 to 207 (ENFSDIEMGEIIMGNIELTRYTRPTPVQK) is the Q motif element. 199-206 (YTRPTPVQ) serves as a coordination point for ATP. Residues 210 to 402 (IPIIKEKRDL…RDFLDEYIFL (193 aa)) enclose the Helicase ATP-binding domain. Lysine 214 participates in a covalent cross-link: Glycyl lysine isopeptide (Lys-Gly) (interchain with G-Cter in SUMO2). 223 to 230 (AQTGSGKT) lines the ATP pocket. Positions 346–349 (DEAD) match the DEAD box motif. Residues 413 to 574 (NITQKVVWVE…EVPSWLESMA (162 aa)) enclose the Helicase C-terminal domain. Residue serine 455 is modified to Phosphoserine. Arginine 590 carries the omega-N-methylarginine modification. Phosphoserine is present on residues serine 592 and serine 603. The segment at 597–627 (ARDYRQSSGSANAGFNSNRANSSRSSGSSHN) is disordered. Residues 603 to 627 (SSGSANAGFNSNRANSSRSSGSSHN) show a composition bias toward low complexity. Arginine 615 and arginine 628 each carry omega-N-methylarginine.

Belongs to the DEAD box helicase family. DDX3/DED1 subfamily. In terms of tissue distribution, found in heart, brain, liver, skeletal muscle, kidney and testis. Low expression detected in lung. In testis, expressed in all types of spermatogenic cells including spermatogonia, spermatocytes, spermatids and somatic Sertoli cells within the seminiferous tubules. Also expressed in Leydig cells and other interstitial cells.

It is found in the cytoplasm. The protein localises to the nucleus. The catalysed reaction is ATP + H2O = ADP + phosphate + H(+). Probable ATP-dependent RNA helicase. During immune response, may enhance IFNB1 expression via IRF3/IRF7 pathway. This is ATP-dependent RNA helicase DDX3Y (Ddx3y) from Mus musculus (Mouse).